Consider the following 225-residue polypeptide: uncharacterized protein (225 aa).

Positions 1-21 (MSLHYYLFIFWILAFVQFSHA) are cleaved as a signal peptide.

As to expression, prismatic layer of shell (at protein level).

It is found in the secreted. This is an uncharacterized protein from Margaritifera margaritifera (Freshwater pearl mussel).